The following is a 458-amino-acid chain: Argininosuccinate lyase (458 aa).

The protein belongs to the lyase 1 family. Argininosuccinate lyase subfamily.

The protein resides in the cytoplasm. The enzyme catalyses 2-(N(omega)-L-arginino)succinate = fumarate + L-arginine. It functions in the pathway amino-acid biosynthesis; L-arginine biosynthesis; L-arginine from L-ornithine and carbamoyl phosphate: step 3/3. The protein is Argininosuccinate lyase of Salmonella newport (strain SL254).